Here is a 202-residue protein sequence, read N- to C-terminus: Protein phosphatase inhibitor 2 family member C (202 aa).

Disordered stretches follow at residues 1 to 51 and 71 to 118; these read MSAS…DESS and PGTS…EQES. The interval 12–17 is required for binding PPP1CC; that stretch reads KGILKN. The segment covering 19–35 has biased composition (low complexity); sequence SSSGSSVATSGQQSGGT. Residues 43 to 55 are required for binding PPP1CC; that stretch reads KSQKWDESSILAA. The segment covering 71–80 has biased composition (polar residues); the sequence is PGTSYMSVQD. Over residues 84–112 the composition is skewed to basic and acidic residues; it reads DSVRDVEGEDSVRGVEGKEATDASDHSCE. Positions 144 to 147 are required for binding PPP1CC catalytic center, displacing metal ions and inhibition of PPP1CC catalytic activity; it reads HYNE. Positions 162 to 202 are disordered; sequence LQSEDNENEETPQGTNEEKTAAEESEEAPLTGGLQTQSCDP.

It belongs to the protein phosphatase inhibitor 2 family. As to expression, detected in sperm (at protein level).

In terms of biological role, functions as a protein phosphatase inhibitor. It inhibits activity of the catalytic subunit of PP1 and weakly inhibits the activity of myosin-associated phosphates. This Homo sapiens (Human) protein is Protein phosphatase inhibitor 2 family member C.